The primary structure comprises 720 residues: Nucleoporin NUP2 (720 aa).

The interval 1 to 33 is disordered; it reads MAKRVADAQIQRETYDSNESDDDVTPSTKVASS. Residues Ser-17 and Ser-20 each carry the phosphoserine modification. Residues 35–50 form an interaction with SRP1 NLS binding site 1 region; that stretch reads VMNRRKIAMPKRRMAF. 2 disordered regions span residues 52-92 and 136-278; these read PFGS…SNSR and KSIE…VDNN. One copy of the FXF 1 repeat lies at 67–69; it reads FSF. A compositionally biased stretch (polar residues) spans 81-92; it reads VDNSPTTESNSR. Ser-137 bears the Phosphoserine mark. Basic and acidic residues predominate over residues 147–159; sequence NDAKPAKVEDVQK. The residue at position 165 (Ser-165) is a Phosphoserine. The stretch at 189–192 is one FXFG 1 repeat; sequence FSFG. The span at 193-202 shows a compositional bias: basic and acidic residues; the sequence is PKKENRKKDE. 2 positions are modified to phosphoserine: Ser-203 and Ser-205. FXF repeat units follow at residues 216–218 and 247–249; these read FKF and FSF. Over residues 243–278 the composition is skewed to polar residues; the sequence is NAKPFSFSSATSTTEQTKSKNPLSLTEATKTNVDNN. FXFG repeat units follow at residues 285–288, 302–305, and 318–321; these read FTFG and FVFG. Over residues 315–324 the composition is skewed to polar residues; it reads KSSFTFGSTT. A disordered region spans residues 315 to 604; sequence KSSFTFGSTT…KPINLQNGEE (290 aa). A compositionally biased stretch (low complexity) spans 345–360; sequence SNDSNPSFSFSIPSKN. Ser-348 and Ser-351 each carry phosphoserine. One copy of the FXF 4 repeat lies at 352 to 354; the sequence is FSF. Thr-361 carries the phosphothreonine modification. The FXFG 5 repeat unit spans residues 369 to 372; it reads FSFG. The segment covering 373-384 has biased composition (polar residues); sequence VPNSSKNETSKP. One copy of the FXFG 6 repeat lies at 386–389; the sequence is FSFG. A compositionally biased stretch (basic and acidic residues) spans 424-435; it reads TEKEKESKKDSK. 5 FXFG repeats span residues 438–441, 474–477, 493–496, 511–514, and 524–527; these read FSFG and FTFG. Low complexity predominate over residues 479-495; sequence NTNTTKTADTKAPTFTF. Polar residues predominate over residues 513 to 533; that stretch reads FGTSQPNNTPSFSFGKTTANL. The segment covering 534–548 has biased composition (low complexity); it reads PANSSTSPAPSIPST. Residues 550–552 form an FXF 5 repeat; it reads FKF. Over residues 574 to 584 the composition is skewed to polar residues; that stretch reads TEATGNESQDA. Phosphoserine is present on Ser-581. Positions 583–720 constitute a RanBD1 domain; sequence DATKVDATPE…AIEDAKKEMK (138 aa). Thr-590 is subject to Phosphothreonine.

As to quaternary structure, component of the nuclear pore complex (NPC). NPC constitutes the exclusive means of nucleocytoplasmic transport. NPCs allow the passive diffusion of ions and small molecules and the active, nuclear transport receptor-mediated bidirectional transport of macromolecules such as proteins, RNAs, ribonucleoparticles (RNPs), and ribosomal subunits across the nuclear envelope. Due to its 8-fold rotational symmetry, all subunits are present with 8 copies or multiples thereof. Binds to the nuclear basket of the NPC through NUP60 in a (GSP1, GSP2) GTPase-GTP-dependent manner. Interacts through its FG repeats with nuclear transport factors. Interacts with KAP122.

It localises to the nucleus. Its subcellular location is the nuclear pore complex. The protein resides in the nucleus membrane. Functions as a component of the nuclear pore complex (NPC). NPC components, collectively referred to as nucleoporins (NUPs), can play the role of both NPC structural components and of docking or interaction partners for transiently associated nuclear transport factors. Active directional transport is assured by both, a Phe-Gly (FG) repeat affinity gradient for these transport factors across the NPC and a transport cofactor concentration gradient across the nuclear envelope (GSP1 and GSP2 GTPases associated predominantly with GTP in the nucleus, with GDP in the cytoplasm). As one of the FG repeat nucleoporins NUP2 is involved in interactions with and guidance of nuclear transport receptors such as SRP1-KAP95 (importin alpha and beta) through the NPC. Like the closely related NUP1 it also plays an important role in disassembling and recycling SRP1-KAP95 to the cytoplasm after nuclear import. Upon entry of the heterotrimeric SRP1-KAP95-cargo complex in the nucleus, NUP2 binds through its N-terminus to the SRP1 nuclear localization signal (NLS) binding site, thus accelerating the release of the NLS-cargo. SRP1 in turn is released from NUP2 by binding of the GSP1-GTP associated export factor CSE1. NUP2 may also have a chromatin boundary/insulator activity through indirect interaction with genomic DNA via CSE1 and blocking of heterochromatin spreading. The polypeptide is Nucleoporin NUP2 (NUP2) (Saccharomyces cerevisiae (strain ATCC 204508 / S288c) (Baker's yeast)).